The sequence spans 431 residues: MNAPHRDDGFFTESLSSRDPELFASITGELGRQRDEIELIASENIVSRAVMEAQGSVMTNKYAEGYAGKRYYGGCDYVDVAETLAIERAKQLFGCAYVNVQPNSGSQANQGVFQALIKPGDTILGMELASGGHLTHGAAPNQSGKWFNAIQYGVRQQDQLIDYDQVAALAREHKPKLIIAGGSAIPRQIDFARFRAIADEVGALLMVDMAHFAGLVAGGAHPSPFPHADVATTTTHKTLRGPRGGMILTNSEEIAKKVNSAIFPGIQGGPLMHVIAAKAVAFGEALRPEFKAYAAQVVKNAQALADELMKGGLDIVTGGTDTHLMLVDLRPKGVKGNATEKALGRAHITCNKNGIPFDPEKPTVTSGVRLGTPAGTTRGFGEAEFREIGRLIVEVVDGLAANGEEGNAAVEEAVKAKVAALCARFPLYPTL.

Residues L128 and 132-134 (GHL) each bind (6S)-5,6,7,8-tetrahydrofolate. Position 237 is an N6-(pyridoxal phosphate)lysine (K237). (6S)-5,6,7,8-tetrahydrofolate is bound at residue E253.

The protein belongs to the SHMT family. Homodimer. Requires pyridoxal 5'-phosphate as cofactor.

It localises to the cytoplasm. The catalysed reaction is (6R)-5,10-methylene-5,6,7,8-tetrahydrofolate + glycine + H2O = (6S)-5,6,7,8-tetrahydrofolate + L-serine. The protein operates within one-carbon metabolism; tetrahydrofolate interconversion. Its pathway is amino-acid biosynthesis; glycine biosynthesis; glycine from L-serine: step 1/1. Its function is as follows. Catalyzes the reversible interconversion of serine and glycine with tetrahydrofolate (THF) serving as the one-carbon carrier. This reaction serves as the major source of one-carbon groups required for the biosynthesis of purines, thymidylate, methionine, and other important biomolecules. Also exhibits THF-independent aldolase activity toward beta-hydroxyamino acids, producing glycine and aldehydes, via a retro-aldol mechanism. The sequence is that of Serine hydroxymethyltransferase from Cereibacter sphaeroides (strain ATCC 17023 / DSM 158 / JCM 6121 / CCUG 31486 / LMG 2827 / NBRC 12203 / NCIMB 8253 / ATH 2.4.1.) (Rhodobacter sphaeroides).